The chain runs to 129 residues: Ergosterol biosynthetic protein 28 (129 aa).

Transmembrane regions (helical) follow at residues 4–24 (LGYW…FGFF), 46–66 (TFGV…FNLE), 71–91 (YLAT…EYLF), and 96–116 (TIAN…WMLL).

Belongs to the ERG28 family.

Its subcellular location is the endoplasmic reticulum membrane. This is Ergosterol biosynthetic protein 28 from Arabidopsis thaliana (Mouse-ear cress).